The following is a 669-amino-acid chain: MSKEAVQQRIEELRDLLNTFNYQYHVLDNPSVSDAEYDRNMQELIKLETENPEFITEDSPSVRVGGAVLDIFEKVTHKSPMLSLGNAFNEGDLRDFDRRVRQGIDGVNVRYICELKIDGLAVSLHYEKGRFIQGSTRGDGITGEDITQNLKTIKAIPLRLQEEVTLEVRGEAYMPKRSFVKLNEEKEQNGEAVFANPRNAAAGSLRQLDPKIAAKRNLSMFVYGLADIEGKTITSHSEALDFLGELGFKTNPNRRICETIEEVIAYVEEWQEKRPNLDYEIDGIVIKVDDVTLQERLGTTAKSPRWAIAYKFPAEEVVTRLTGIELSVGRTGVVTPTAELEPVRVAGTIVRRASLHNEDLIREKDIRIGDYVVVKKAGDIIPEVVNVVFDKRTGKEEAYHMPTHCPTCDSGLVRLEEEVALRCINPACPAQIREGLIHFVSRNAMNIDGLGERVITQLFEANYIRTFADLYGLTKDQLLQLDRFGEKSASNLVQAIEASKENSLERLLFGLGIRHVGAKAARTLAEHFETMDNLVKAGEEELKAINEIGEKMAQSIVTYFDNEDVLHLIQQFKDYGVNMTYKGIKRADLQNIASYFAGKTVVLTGKLEVMGRSEAKKKIEALGGKVTGSVSKSTDLVIAGEAAGSKLAQAEKHNIEIWNEERFLQELNK.

NAD(+) is bound by residues 34-38 (DAEYD), 83-84 (SL), and Glu-114. The active-site N6-AMP-lysine intermediate is the Lys-116. Arg-137, Glu-171, Lys-287, and Lys-311 together coordinate NAD(+). The Zn(2+) site is built by Cys-405, Cys-408, Cys-423, and Cys-428. The region spanning 591-669 (NIASYFAGKT…EERFLQELNK (79 aa)) is the BRCT domain.

This sequence belongs to the NAD-dependent DNA ligase family. LigA subfamily. It depends on Mg(2+) as a cofactor. Mn(2+) is required as a cofactor.

It catalyses the reaction NAD(+) + (deoxyribonucleotide)n-3'-hydroxyl + 5'-phospho-(deoxyribonucleotide)m = (deoxyribonucleotide)n+m + AMP + beta-nicotinamide D-nucleotide.. Its function is as follows. DNA ligase that catalyzes the formation of phosphodiester linkages between 5'-phosphoryl and 3'-hydroxyl groups in double-stranded DNA using NAD as a coenzyme and as the energy source for the reaction. It is essential for DNA replication and repair of damaged DNA. The sequence is that of DNA ligase from Bacillus cytotoxicus (strain DSM 22905 / CIP 110041 / 391-98 / NVH 391-98).